The sequence spans 562 residues: Protein wntless (562 aa).

Residues 1 to 13 are Cytoplasmic-facing; sequence MSGTILENLSGRK. The helical transmembrane segment at 14–34 threads the bilayer; the sequence is LSILVASLLLCQVFCFLLGGL. Residues 35 to 239 lie on the Lumenal side of the membrane; sequence YAPLPAGHVT…AIHQNGGFTQ (205 aa). Asparagine 58 carries N-linked (GlcNAc...) asparagine glycosylation. A helical transmembrane segment spans residues 240-260; that stretch reads IWLMLKTVLFPFVVGIMIWFW. The Cytoplasmic portion of the chain corresponds to 261–270; that stretch reads RRVHLLQRSP. The chain crosses the membrane as a helical span at residues 271–291; it reads ALLEYMLIYLGGALTFLNLPL. Over 292-311 the chain is Lumenal; the sequence is EYLSLVVEMPYMLLLSDIRQ. The helical transmembrane segment at 312 to 332 threads the bilayer; the sequence is GIFYAMLLSFWLVFAGEHMLI. Topologically, residues 333 to 344 are cytoplasmic; that stretch reads QDAPNKSTIRSR. Residues 345–365 form a helical membrane-spanning segment; the sequence is YWKHLSAVVVGCISLFVFDIC. Over 366–390 the chain is Lumenal; it reads ERGVQLRNPFYSIWTTPLGAKVAMT. Residues 391 to 411 form a helical membrane-spanning segment; the sequence is FIILAGVSAAIYFLFLCYMIW. Topologically, residues 412–441 are cytoplasmic; the sequence is KVFRNIGDKRTSLPSMSQARRLHYEGLIYR. Residues 442–462 form a helical membrane-spanning segment; sequence FKFLMLATLLCAALTVAGFIM. Residues 463–482 lie on the Lumenal side of the membrane; that stretch reads GQMAEGQWQWNDNVEIQLTS. The helical transmembrane segment at 483–503 threads the bilayer; it reads AFLTGVYGMWNIYIFALLILY. Residues 504–562 lie on the Cytoplasmic side of the membrane; it reads APSHKQWPTMHHSDETTQSNENIVASAASEEIEFSHLPSDSNPSEISSLTSFTRKVAFD. Positions 539–562 are disordered; sequence HLPSDSNPSEISSLTSFTRKVAFD. The segment covering 541 to 556 has biased composition (polar residues); that stretch reads PSDSNPSEISSLTSFT.

Belongs to the wntless family. In terms of assembly, interacts with wg; in the Golgi. Interacts with Vps35, a component of the retromer complex; wls stability is regulated by Vps35.

It localises to the presynaptic cell membrane. The protein resides in the postsynaptic cell membrane. Its subcellular location is the cell membrane. It is found in the endoplasmic reticulum membrane. The protein localises to the endosome membrane. It localises to the golgi apparatus membrane. In terms of biological role, a segment polarity gene required for wingless (wg)-dependent patterning processes, acting in both wg-sending cells and wg-target cells. In non-neuronal cells wls directs wg secretion. The wls traffic loop encompasses the Golgi, the cell surface, an endocytic compartment and a retrograde route leading back to the Golgi, and involves clathrin-mediated endocytosis and the retromer complex (a conserved protein complex consisting of Vps35 and Vps26). In neuronal cells (the larval motorneuron NMJ), the wg signal moves across the synapse via the release of wls-containing exosome-like vesicles. Postsynaptic wls is required for the trafficking of fz2 through the fz2-interacting protein Grip. The polypeptide is Protein wntless (Drosophila ananassae (Fruit fly)).